Consider the following 468-residue polypeptide: ATP synthase subunit beta (468 aa).

155–162 provides a ligand contact to ATP; it reads GGAGVGKT.

The protein belongs to the ATPase alpha/beta chains family. In terms of assembly, F-type ATPases have 2 components, CF(1) - the catalytic core - and CF(0) - the membrane proton channel. CF(1) has five subunits: alpha(3), beta(3), gamma(1), delta(1), epsilon(1). CF(0) has three main subunits: a(1), b(2) and c(9-12). The alpha and beta chains form an alternating ring which encloses part of the gamma chain. CF(1) is attached to CF(0) by a central stalk formed by the gamma and epsilon chains, while a peripheral stalk is formed by the delta and b chains.

It is found in the cell membrane. The catalysed reaction is ATP + H2O + 4 H(+)(in) = ADP + phosphate + 5 H(+)(out). Its function is as follows. Produces ATP from ADP in the presence of a proton gradient across the membrane. The catalytic sites are hosted primarily by the beta subunits. This Streptococcus pneumoniae (strain Taiwan19F-14) protein is ATP synthase subunit beta.